The following is a 641-amino-acid chain: Chaperone protein HtpG (641 aa).

The segment at 1–348 (MTTATEKQTL…SNDLSLNVSR (348 aa)) is a; substrate-binding. The interval 349–565 (EILQNDKAVE…AYDMGVQMRR (217 aa)) is b. Positions 566 to 641 (IMEAAGQALP…KLLLELSNAG (76 aa)) are c.

The protein belongs to the heat shock protein 90 family. Homodimer.

The protein resides in the cytoplasm. Molecular chaperone. Has ATPase activity. The protein is Chaperone protein HtpG of Hahella chejuensis (strain KCTC 2396).